We begin with the raw amino-acid sequence, 114 residues long: MICOS complex subunit MIC12 (114 aa).

A helical membrane pass occupies residues 4 to 26 (IAKLGSFTLVSGVVATSCYYYFI).

This sequence belongs to the MICOS complex subunit Mic12 family. In terms of assembly, component of the mitochondrial contact site and cristae organizing system (MICOS) complex.

It localises to the mitochondrion inner membrane. Functionally, component of the MICOS complex, a large protein complex of the mitochondrial inner membrane that plays crucial roles in the maintenance of crista junctions, inner membrane architecture, and formation of contact sites to the outer membrane. This Candida glabrata (strain ATCC 2001 / BCRC 20586 / JCM 3761 / NBRC 0622 / NRRL Y-65 / CBS 138) (Yeast) protein is MICOS complex subunit MIC12 (AIM5).